Consider the following 121-residue polypeptide: Small ribosomal subunit protein uS13 (121 aa).

Positions 92-121 (RKGLPMRGQRTRTNARTRKGPRRAAQALKK) are disordered.

It belongs to the universal ribosomal protein uS13 family. As to quaternary structure, part of the 30S ribosomal subunit. Forms a loose heterodimer with protein S19. Forms two bridges to the 50S subunit in the 70S ribosome.

In terms of biological role, located at the top of the head of the 30S subunit, it contacts several helices of the 16S rRNA. In the 70S ribosome it contacts the 23S rRNA (bridge B1a) and protein L5 of the 50S subunit (bridge B1b), connecting the 2 subunits; these bridges are implicated in subunit movement. Contacts the tRNAs in the A and P-sites. The sequence is that of Small ribosomal subunit protein uS13 from Burkholderia cenocepacia (strain HI2424).